We begin with the raw amino-acid sequence, 689 residues long: MTHQYLIEIGLEDMPAHVVTPSLQQFHDKTVAFLKENHLDHGAIDQYATPRRLALLIHDLADKQEDVEEDVKGPAKKIAQDADGNWTKAAIGFSRGQGMTPDDIVFKTIKGVDYVYLHKAIKGKTAAAILPGMLDVIKSLTFPTRMKWGAYDFEYIRPIHWLVSLLDDAIVPMKLLDVDAGRTTQGHRFLGRPVTLGNAADYVAALKAQFVIVEPAARKQLISDQIHQIAADHQWQIDLDADLLEEVNNLVEWPTAFAGNFDEKYLKIPEAVLITSMKDNQRYFYARDASGKMVNAFIGVRNGNADHLANVIAGNEKVLTARLEDAAFFYAEDQKRSIADDVDRLKAVSFHDKISSMYDKMARTRVIADLLADRFGLSATDKADLDRAASIYKFDLVTSMVGEFPELQGIMGEHYAQLAGEKPAVAQAIAEHYEPISADGALPESLVGTVLAIADKFDSLMSFFAVDLIPSGSNDPYALRRQAYGIVRMIAKHDWPFAVAELQTTIADALKAAGKTNNLDFAAHQQDLNAFMIDRAKQVLQGQKIRHDIVDAVTVRADADLAGILDAAKILSAHADDTDFKPVMEALGRVLRITKKQQVKVDVDTAKFENPSEGQLYDATVATAKKFDDEPTEADYQALKALADPINAYFDATMVMADDQAIRQNRLAALLQLAALIKQFGDVSQVIVK.

This sequence belongs to the class-II aminoacyl-tRNA synthetase family. In terms of assembly, tetramer of two alpha and two beta subunits.

It localises to the cytoplasm. The catalysed reaction is tRNA(Gly) + glycine + ATP = glycyl-tRNA(Gly) + AMP + diphosphate. This chain is Glycine--tRNA ligase beta subunit, found in Lacticaseibacillus paracasei (strain ATCC 334 / BCRC 17002 / CCUG 31169 / CIP 107868 / KCTC 3260 / NRRL B-441) (Lactobacillus paracasei).